Reading from the N-terminus, the 210-residue chain is Large ribosomal subunit protein uL16 (210 aa).

Belongs to the universal ribosomal protein uL16 family. In terms of assembly, component of the large ribosomal subunit. Mature ribosomes consist of a small (40S) and a large (60S) subunit. The 40S subunit contains about 33 different proteins and 1 molecule of RNA (18S). The 60S subunit contains about 49 different proteins and 3 molecules of RNA (28S, 5.8S and 5S).

Its subcellular location is the cytoplasm. Component of the large ribosomal subunit. Plays a role in the formation of actively translating ribosomes. Its function is as follows. (Microbial infection) Seems to bind to the leucine zipper of viral and cellular JUN. In Gallus gallus (Chicken), this protein is Large ribosomal subunit protein uL16.